Consider the following 159-residue polypeptide: Small ribosomal subunit protein uS13 (159 aa).

A disordered region spans residues 136–159; sequence QRTRSTGRSGATVGVTRKKTQAKK. Residues 138–149 are compositionally biased toward low complexity; it reads TRSTGRSGATVG.

It belongs to the universal ribosomal protein uS13 family. In terms of assembly, part of the 30S ribosomal subunit. Forms a loose heterodimer with protein S19. Forms two bridges to the 50S subunit in the 70S ribosome.

Located at the top of the head of the 30S subunit, it contacts several helices of the 16S rRNA. In the 70S ribosome it contacts the 23S rRNA (bridge B1a) and protein L5 of the 50S subunit (bridge B1b), connecting the 2 subunits; these bridges are implicated in subunit movement. This is Small ribosomal subunit protein uS13 from Methanothrix thermoacetophila (strain DSM 6194 / JCM 14653 / NBRC 101360 / PT) (Methanosaeta thermophila).